Consider the following 220-residue polypeptide: Probable septum site-determining protein MinC (220 aa).

It belongs to the MinC family. Interacts with MinD and FtsZ.

Its function is as follows. Cell division inhibitor that blocks the formation of polar Z ring septums. Rapidly oscillates between the poles of the cell to destabilize FtsZ filaments that have formed before they mature into polar Z rings. Prevents FtsZ polymerization. In Vibrio atlanticus (strain LGP32) (Vibrio splendidus (strain Mel32)), this protein is Probable septum site-determining protein MinC.